We begin with the raw amino-acid sequence, 289 residues long: uncharacterized protein (289 aa).

Residues 1 to 58 enclose the HTH lysR-type domain; sequence MDEKDWILLKILHEEQSVTKTAERLFTSQPSITYRLKKIEEIFGIELFTKRHKGITFT. A DNA-binding region (H-T-H motif) is located at residues 18-37; it reads VTKTAERLFTSQPSITYRLK.

It belongs to the LysR transcriptional regulatory family.

This is an uncharacterized protein from Bacillus subtilis (strain 168).